We begin with the raw amino-acid sequence, 229 residues long: Molybdenum transport system permease protein ModB (229 aa).

Topologically, residues M1–K16 are periplasmic. Residues V11–L219 enclose the ABC transmembrane type-1 domain. Residues V17–V37 form a helical membrane-spanning segment. The Cytoplasmic portion of the chain corresponds to R38–S49. A helical transmembrane segment spans residues V50–M70. The Periplasmic portion of the chain corresponds to G71–W83. Residues F84–F104 traverse the membrane as a helical segment. Topologically, residues P105–V136 are cytoplasmic. A helical membrane pass occupies residues F137–F157. The Periplasmic portion of the chain corresponds to A158 to L201. Residues C202–I222 form a helical membrane-spanning segment. The Cytoplasmic portion of the chain corresponds to S223 to R229.

The protein belongs to the binding-protein-dependent transport system permease family. CysTW subfamily.

It localises to the cell inner membrane. Part of the binding-protein-dependent transport system for molybdenum; probably responsible for the translocation of the substrate across the membrane. This is Molybdenum transport system permease protein ModB (modB) from Escherichia coli O157:H7.